We begin with the raw amino-acid sequence, 387 residues long: Putative glutamate--cysteine ligase 2 (387 aa).

This sequence belongs to the glutamate--cysteine ligase type 2 family. YbdK subfamily.

The catalysed reaction is L-cysteine + L-glutamate + ATP = gamma-L-glutamyl-L-cysteine + ADP + phosphate + H(+). In terms of biological role, ATP-dependent carboxylate-amine ligase which exhibits weak glutamate--cysteine ligase activity. The chain is Putative glutamate--cysteine ligase 2 from Trichormus variabilis (strain ATCC 29413 / PCC 7937) (Anabaena variabilis).